The primary structure comprises 290 residues: Syntaxin (290 aa).

The disordered stretch occupies residues 1–22 (MTKDRLAALKAAQSDDDDNDDV). The Cytoplasmic segment spans residues 1–267 (MTKDRLAALK…KYQSKARRKK (267 aa)). Residues 32–114 (MEEFFEQVDE…EEHTNKSSAD (83 aa)) adopt a coiled-coil conformation. In terms of domain architecture, t-SNARE coiled-coil homology spans 194-256 (LADIEARHND…ETAKMDTKKA (63 aa)). Residues 268-288 (IMILVCLAILIIILVGVIGGT) traverse the membrane as a helical; Anchor for type IV membrane protein segment. The Extracellular segment spans residues 289–290 (LG).

Belongs to the syntaxin family.

The protein resides in the membrane. Its function is as follows. Potentially involved in docking of synaptic vesicles at presynaptic active zones. The polypeptide is Syntaxin (Aplysia californica (California sea hare)).